Reading from the N-terminus, the 482-residue chain is GTPase Obg (482 aa).

Residues 2–159 (PRFIDRVVVH…RELTLELKTV (158 aa)) form the Obg domain. The region spanning 160–341 (ADVGLVGFPS…LIFALWDMVA (182 aa)) is the OBG-type G domain. GTP-binding positions include 166-173 (GFPSAGKS), 191-195 (FTTLA), 212-215 (DVPG), 292-295 (NKID), and 322-324 (STV). S173 and T193 together coordinate Mg(2+). The OCT domain maps to 359-437 (PIPVDETAFS…IGDMTFDWEP (79 aa)). Residues 450 to 482 (RGTDVRLEQTDRVGADERKAARKARRQSDDGEE) are disordered. Residues 452–468 (TDVRLEQTDRVGADERK) are compositionally biased toward basic and acidic residues.

This sequence belongs to the TRAFAC class OBG-HflX-like GTPase superfamily. OBG GTPase family. In terms of assembly, monomer. It depends on Mg(2+) as a cofactor.

The protein resides in the cytoplasm. An essential GTPase which binds GTP, GDP and possibly (p)ppGpp with moderate affinity, with high nucleotide exchange rates and a fairly low GTP hydrolysis rate. Plays a role in control of the cell cycle, stress response, ribosome biogenesis and in those bacteria that undergo differentiation, in morphogenesis control. This Mycolicibacterium gilvum (strain PYR-GCK) (Mycobacterium gilvum (strain PYR-GCK)) protein is GTPase Obg.